The chain runs to 292 residues: 4,5:9,10-diseco-3-hydroxy-5,9,17-trioxoandrosta-1(10),2-diene-4-oate hydrolase (292 aa).

Residues 44–45 (GG), Asn53, Asn113, and Arg192 each bind substrate. Residue His269 is the Proton acceptor of the active site. Residue Trp270 participates in substrate binding.

It belongs to the AB hydrolase superfamily. HsaD family. As to quaternary structure, homodimer.

The catalysed reaction is (1E,2Z)-3-hydroxy-5,9,17-trioxo-4,5:9,10-disecoandrosta-1(10),2-dien-4-oate + H2O = 3-[(3aS,4S,7aS)-7a-methyl-1,5-dioxo-octahydro-1H-inden-4-yl]propanoate + (2Z,4Z)-2-hydroxyhexa-2,4-dienoate + H(+). It functions in the pathway lipid metabolism; steroid biosynthesis. In terms of biological role, catalyzes the hydrolysis of a carbon-carbon bond in 4,5: 9,10-diseco-3-hydroxy-5,9,17-trioxoandrosta-1(10),2-diene-4-oate (4,9-DSHA) to yield 9,17-dioxo-1,2,3,4,10,19-hexanorandrostan-5-oate (DOHNAA) and 2-hydroxy-hexa-2,4-dienoate (HHD). Also involved in biphenyl and polychlorinated biphenyls (PCBs) degradation. The sequence is that of 4,5:9,10-diseco-3-hydroxy-5,9,17-trioxoandrosta-1(10),2-diene-4-oate hydrolase (hsaD) from Rhodococcus jostii (strain RHA1).